Here is a 271-residue protein sequence, read N- to C-terminus: Formamidopyrimidine-DNA glycosylase (271 aa).

Pro-2 serves as the catalytic Schiff-base intermediate with DNA. Catalysis depends on Glu-3, which acts as the Proton donor. Lys-57 (proton donor; for beta-elimination activity) is an active-site residue. DNA is bound by residues His-90, Arg-109, and Lys-151. An FPG-type zinc finger spans residues 236-270; it reads HVYGRGGESCTQCGNLLSEIKLGQRATVFCGLCQT. The Proton donor; for delta-elimination activity role is filled by Arg-260.

The protein belongs to the FPG family. In terms of assembly, monomer. Zn(2+) serves as cofactor.

It carries out the reaction Hydrolysis of DNA containing ring-opened 7-methylguanine residues, releasing 2,6-diamino-4-hydroxy-5-(N-methyl)formamidopyrimidine.. It catalyses the reaction 2'-deoxyribonucleotide-(2'-deoxyribose 5'-phosphate)-2'-deoxyribonucleotide-DNA = a 3'-end 2'-deoxyribonucleotide-(2,3-dehydro-2,3-deoxyribose 5'-phosphate)-DNA + a 5'-end 5'-phospho-2'-deoxyribonucleoside-DNA + H(+). Functionally, involved in base excision repair of DNA damaged by oxidation or by mutagenic agents. Acts as a DNA glycosylase that recognizes and removes damaged bases. Has a preference for oxidized purines, such as 7,8-dihydro-8-oxoguanine (8-oxoG). Has AP (apurinic/apyrimidinic) lyase activity and introduces nicks in the DNA strand. Cleaves the DNA backbone by beta-delta elimination to generate a single-strand break at the site of the removed base with both 3'- and 5'-phosphates. This chain is Formamidopyrimidine-DNA glycosylase, found in Shewanella woodyi (strain ATCC 51908 / MS32).